A 329-amino-acid polypeptide reads, in one-letter code: Nitrogenase iron-iron protein beta chain (329 aa).

[8Fe-7S] cluster-binding residues include cysteine 20, cysteine 45, cysteine 104, and serine 143. A disordered region spans residues serine 213–glutamine 288. Residues arginine 257 to tyrosine 271 are compositionally biased toward basic residues.

It belongs to the NifD/NifK/NifE/NifN family. Hexamer of two alpha, two beta, and two delta chains. The cofactor is [8Fe-7S] cluster.

It carries out the reaction N2 + 8 reduced [2Fe-2S]-[ferredoxin] + 16 ATP + 16 H2O = H2 + 8 oxidized [2Fe-2S]-[ferredoxin] + 2 NH4(+) + 16 ADP + 16 phosphate + 6 H(+). This iron-iron protein is part of the nitrogenase complex that catalyzes the key enzymatic reactions in nitrogen fixation. Other nitrogenase complexes utilize a molybdenum-iron protein or a vanadium-iron protein. This is Nitrogenase iron-iron protein beta chain (anfK) from Ruminiclostridium hungatei (Clostridium hungatei).